Consider the following 113-residue polypeptide: uncharacterized protein (113 aa).

The N-terminal stretch at 1 to 16 is a signal peptide; it reads MKCLVVLTALFGISTA. The span at 81-101 shows a compositional bias: gly residues; sequence GGNGGNGGGGNGGNNGNGNGN. The tract at residues 81-103 is disordered; it reads GGNGGNGGGGNGGNNGNGNGNNG.

In terms of tissue distribution, nacreous layer of shell (at protein level).

It is found in the secreted. This is an uncharacterized protein from Margaritifera margaritifera (Freshwater pearl mussel).